The chain runs to 121 residues: NAD(P)H-quinone oxidoreductase subunit M (121 aa).

Belongs to the complex I NdhM subunit family. In terms of assembly, NDH-1 can be composed of about 15 different subunits; different subcomplexes with different compositions have been identified which probably have different functions.

It localises to the cellular thylakoid membrane. The enzyme catalyses a plastoquinone + NADH + (n+1) H(+)(in) = a plastoquinol + NAD(+) + n H(+)(out). The catalysed reaction is a plastoquinone + NADPH + (n+1) H(+)(in) = a plastoquinol + NADP(+) + n H(+)(out). NDH-1 shuttles electrons from an unknown electron donor, via FMN and iron-sulfur (Fe-S) centers, to quinones in the respiratory and/or the photosynthetic chain. The immediate electron acceptor for the enzyme in this species is believed to be plastoquinone. Couples the redox reaction to proton translocation, and thus conserves the redox energy in a proton gradient. Cyanobacterial NDH-1 also plays a role in inorganic carbon-concentration. This Synechococcus sp. (strain JA-3-3Ab) (Cyanobacteria bacterium Yellowstone A-Prime) protein is NAD(P)H-quinone oxidoreductase subunit M.